The following is a 353-amino-acid chain: Phenol 2-monooxygenase, reductase component DmpP (353 aa).

A 2Fe-2S ferredoxin-type domain is found at 3 to 93 (YNVTIEPTGE…DLVIEADVDA (91 aa)). [2Fe-2S] cluster is bound by residues Cys37, Cys42, Cys45, and Cys77. Residues 102 to 201 (VEDYRGVVSA…SGPYGQFFVR (100 aa)) enclose the FAD-binding FR-type domain.

The multicomponent enzyme phenol hydroxylase is formed by DmpL (P1 component), DmpM (P2 component), DmpN (P3 component), DmpO (P4 component) and DmpP (P5 component). FAD serves as cofactor. Requires [2Fe-2S] cluster as cofactor.

It carries out the reaction phenol + NADH + O2 + H(+) = catechol + NAD(+) + H2O. It functions in the pathway aromatic compound metabolism; phenol degradation. Part of a multicomponent enzyme which catalyzes the degradation of phenol and some of its methylated derivatives. DmpP probably transfers electrons from NADH, via FAD and the iron-sulfur center, to the oxygenase component of the complex. Required for growth on phenol and for in vitro phenol hydroxylase activity. In Pseudomonas sp. (strain CF600), this protein is Phenol 2-monooxygenase, reductase component DmpP.